We begin with the raw amino-acid sequence, 274 residues long: Octanoyltransferase LipM (274 aa).

The BPL/LPL catalytic domain occupies 31–245; the sequence is GEVPPTLRLY…GFAEALGARL (215 aa). Catalysis depends on cysteine 147, which acts as the Acyl-thioester intermediate.

The protein belongs to the octanoyltransferase LipM family. Monomer.

The enzyme catalyses octanoyl-[ACP] + L-lysyl-[protein] = N(6)-octanoyl-L-lysyl-[protein] + holo-[ACP] + H(+). Its pathway is protein modification; protein lipoylation via endogenous pathway; protein N(6)-(lipoyl)lysine from octanoyl-[acyl-carrier-protein]. Functionally, catalyzes the transfer of endogenously produced octanoic acid from octanoyl-acyl-carrier-protein onto the lipoyl domain of GcvH, an intermediate carrier during protein lipoylation. The sequence is that of Octanoyltransferase LipM from Kyrpidia tusciae (strain DSM 2912 / NBRC 15312 / T2) (Bacillus tusciae).